Consider the following 856-residue polypeptide: DNA mismatch repair protein MutS (856 aa).

Residue G618 to S625 participates in ATP binding.

The protein belongs to the DNA mismatch repair MutS family.

In terms of biological role, this protein is involved in the repair of mismatches in DNA. It is possible that it carries out the mismatch recognition step. This protein has a weak ATPase activity. The chain is DNA mismatch repair protein MutS from Shewanella baltica (strain OS223).